The chain runs to 120 residues: Aspartate 1-decarboxylase (120 aa).

The Schiff-base intermediate with substrate; via pyruvic acid role is filled by Ser-25. Ser-25 is modified (pyruvic acid (Ser)). Thr-57 provides a ligand contact to substrate. Tyr-58 functions as the Proton donor in the catalytic mechanism. 73–75 (GAA) is a substrate binding site.

Belongs to the PanD family. As to quaternary structure, heterooctamer of four alpha and four beta subunits. Requires pyruvate as cofactor. Post-translationally, is synthesized initially as an inactive proenzyme, which is activated by self-cleavage at a specific serine bond to produce a beta-subunit with a hydroxyl group at its C-terminus and an alpha-subunit with a pyruvoyl group at its N-terminus.

It is found in the cytoplasm. The enzyme catalyses L-aspartate + H(+) = beta-alanine + CO2. It participates in cofactor biosynthesis; (R)-pantothenate biosynthesis; beta-alanine from L-aspartate: step 1/1. In terms of biological role, catalyzes the pyruvoyl-dependent decarboxylation of aspartate to produce beta-alanine. In Methylibium petroleiphilum (strain ATCC BAA-1232 / LMG 22953 / PM1), this protein is Aspartate 1-decarboxylase.